Consider the following 37-residue polypeptide: Large ribosomal subunit protein bL36c (37 aa).

The protein belongs to the bacterial ribosomal protein bL36 family.

The protein resides in the plastid. In Euglena longa (Euglenophycean alga), this protein is Large ribosomal subunit protein bL36c (rpl36).